A 1832-amino-acid chain; its full sequence is Zinc finger SWIM domain-containing protein 8 (1832 aa).

3 positions are modified to phosphoserine: S36, S48, and S53. The interval 45–67 (RKQSAGPNSPTGGGGGGGSGGTR) is disordered. Positions 55–65 (TGGGGGGGSGG) are enriched in gly residues. The segment at 172–208 (YNVAVMFDRCRVTSCSCTCGAGAKWCTHVVALCLFRI) adopts an SWIM-type zinc-finger fold. Phosphoserine is present on residues S437 and S564. Disordered regions lie at residues 516 to 722 (PGAS…VGEE), 800 to 821 (NPPD…VSTS), and 1018 to 1216 (SQTH…TVDV). Residues 563-572 (LSAEGGDKAL) are compositionally biased toward basic and acidic residues. Positions 1021-1042 (HKPQTLSSFYSSSRPATANQRS) are enriched in polar residues. Gly residues predominate over residues 1121 to 1132 (SRGGYNGRGWGS). Position 1141 is a phosphothreonine (T1141). The span at 1146-1161 (IDSSAPETTSDSSPTL) shows a compositional bias: polar residues. Residues S1155, S1158, and S1162 each carry the phosphoserine modification. The span at 1176 to 1211 (GRGQDSDSISSSSSDSLGSSSSSGSRRASASGGARA) shows a compositional bias: low complexity. S1270 carries the post-translational modification Phosphoserine. The span at 1435 to 1446 (STAREGATSCSG) shows a compositional bias: polar residues. The interval 1435 to 1465 (STAREGATSCSGSGMRAAGEAGRGLPEGRGA) is disordered. The span at 1455 to 1465 (AGRGLPEGRGA) shows a compositional bias: gly residues. At S1831 the chain carries Phosphoserine.

The protein belongs to the ZSWIM8 family. As to quaternary structure, component of the SCF-like E3 ubiquitin-protein ligase complex which contains CUL3, RBX1, ELOB, ELOC and ZSWIM8. Interacts with DAB1.

It localises to the cytoplasm. It is found in the cytosol. Its pathway is protein modification; protein ubiquitination. Substrate recognition component of a SCF-like E3 ubiquitin-protein ligase complex that promotes target-directed microRNA degradation (TDMD), a process that mediates degradation of microRNAs (miRNAs). The SCF-like E3 ubiquitin-protein ligase complex acts by catalyzing ubiquitination and subsequent degradation of AGO proteins (AGO1, AGO2, AGO3 and/or AGO4), thereby exposing miRNAs for degradation. Specifically recognizes and binds AGO proteins when they are engaged with a TDMD target. May also acts as a regulator of axon guidance: specifically recognizes misfolded ROBO3 and promotes its ubiquitination and subsequent degradation. Plays an essential role for proper embryonic development of heart and lung. Controls protein quality of DAB1, a key signal molecule for brain development, thus protecting its signaling strength. Mechanistically, recognizes intrinsically disordered regions of DAB1 and eliminates misfolded DAB1 that cannot be properly phosphorylated. This chain is Zinc finger SWIM domain-containing protein 8, found in Mus musculus (Mouse).